The primary structure comprises 355 residues: D-alanine--D-alanine ligase (355 aa).

The 208-residue stretch at 143–350 (KIIFSNLKIP…IEQLVAKLVD (208 aa)) folds into the ATP-grasp domain. Residue 178–233 (LKKLNFPVFVKPSNSGSSLGISKVINKSEIIPALEKARGIDPSILIEEGLEVREIE) coordinates ATP. Mg(2+) contacts are provided by Asp-303, Glu-317, and Asn-319.

It belongs to the D-alanine--D-alanine ligase family. Mg(2+) serves as cofactor. Mn(2+) is required as a cofactor.

It localises to the cytoplasm. It carries out the reaction 2 D-alanine + ATP = D-alanyl-D-alanine + ADP + phosphate + H(+). The protein operates within cell wall biogenesis; peptidoglycan biosynthesis. In terms of biological role, cell wall formation. The sequence is that of D-alanine--D-alanine ligase from Prochlorococcus marinus (strain AS9601).